We begin with the raw amino-acid sequence, 266 residues long: 2-dehydro-3-deoxy-D-gluconate/2-dehydro-3-deoxy-phosphogluconate aldolase (266 aa).

Residues 36-37 (ST), 123-125 (YNI), and 151-153 (KDS) each bind substrate. Catalysis depends on Lys-151, which acts as the Schiff-base intermediate with substrate.

This sequence belongs to the DapA family. KDPG aldolase subfamily. In terms of assembly, homotetramer; dimer of dimers.

The enzyme catalyses 2-dehydro-3-deoxy-6-phospho-D-gluconate = D-glyceraldehyde 3-phosphate + pyruvate. The catalysed reaction is 2-dehydro-3-deoxy-D-gluconate = D-glyceraldehyde + pyruvate. It catalyses the reaction 2-dehydro-3-deoxy-6-phospho-D-galactonate = D-glyceraldehyde 3-phosphate + pyruvate. It carries out the reaction 2-dehydro-3-deoxy-D-galactonate = D-glyceraldehyde + pyruvate. It participates in carbohydrate acid metabolism; 2-dehydro-3-deoxy-D-gluconate degradation; D-glyceraldehyde 3-phosphate and pyruvate from 2-dehydro-3-deoxy-D-gluconate: step 2/2. Its function is as follows. Involved in the degradation of glucose via the Entner-Doudoroff pathway. Catalyzes the reversible cleavage of 2-keto-3-deoxy-6-phosphogluconate (KDPG) and 2-keto-3-deoxygluconate (KDG) forming pyruvate and glyceraldehyde 3-phosphate or glyceraldehyde, respectively. It is also able to catalyze the reversible cleavage of 2-keto-3-deoxy-6-phosphogalactonate (KDPGal) and 2-keto-3-deoxygalactonate (KDGal). It is equally active with both D- and L-glyceraldehyde. This chain is 2-dehydro-3-deoxy-D-gluconate/2-dehydro-3-deoxy-phosphogluconate aldolase, found in Picrophilus torridus (strain ATCC 700027 / DSM 9790 / JCM 10055 / NBRC 100828 / KAW 2/3).